Here is a 324-residue protein sequence, read N- to C-terminus: tRNA U34 carboxymethyltransferase (324 aa).

Carboxy-S-adenosyl-L-methionine is bound by residues Lys-92, Trp-106, Lys-111, Gly-131, 153 to 155 (DPT), 182 to 183 (IE), Met-197, Tyr-201, and Arg-316.

Belongs to the class I-like SAM-binding methyltransferase superfamily. CmoB family. As to quaternary structure, homotetramer.

It carries out the reaction carboxy-S-adenosyl-L-methionine + 5-hydroxyuridine(34) in tRNA = 5-carboxymethoxyuridine(34) in tRNA + S-adenosyl-L-homocysteine + H(+). Catalyzes carboxymethyl transfer from carboxy-S-adenosyl-L-methionine (Cx-SAM) to 5-hydroxyuridine (ho5U) to form 5-carboxymethoxyuridine (cmo5U) at position 34 in tRNAs. The chain is tRNA U34 carboxymethyltransferase from Proteus mirabilis (strain HI4320).